The primary structure comprises 180 residues: Large ribosomal subunit protein uL5 (180 aa).

The protein belongs to the universal ribosomal protein uL5 family. Part of the 50S ribosomal subunit; part of the 5S rRNA/L5/L18/L25 subcomplex. Contacts the 5S rRNA and the P site tRNA. Forms a bridge to the 30S subunit in the 70S ribosome.

Functionally, this is one of the proteins that bind and probably mediate the attachment of the 5S RNA into the large ribosomal subunit, where it forms part of the central protuberance. In the 70S ribosome it contacts protein S13 of the 30S subunit (bridge B1b), connecting the 2 subunits; this bridge is implicated in subunit movement. Contacts the P site tRNA; the 5S rRNA and some of its associated proteins might help stabilize positioning of ribosome-bound tRNAs. This is Large ribosomal subunit protein uL5 from Chlamydia trachomatis serovar L2 (strain ATCC VR-902B / DSM 19102 / 434/Bu).